We begin with the raw amino-acid sequence, 243 residues long: Carboxy-S-adenosyl-L-methionine synthase (243 aa).

S-adenosyl-L-methionine-binding positions include Tyr-39, 64-66 (GCS), 90-91 (DN), 118-119 (DL), Asn-133, and Arg-200.

It belongs to the class I-like SAM-binding methyltransferase superfamily. Cx-SAM synthase family. In terms of assembly, homodimer.

The catalysed reaction is prephenate + S-adenosyl-L-methionine = carboxy-S-adenosyl-L-methionine + 3-phenylpyruvate + H2O. Catalyzes the conversion of S-adenosyl-L-methionine (SAM) to carboxy-S-adenosyl-L-methionine (Cx-SAM). In Idiomarina loihiensis (strain ATCC BAA-735 / DSM 15497 / L2-TR), this protein is Carboxy-S-adenosyl-L-methionine synthase.